The sequence spans 308 residues: Ornithine carbamoyltransferase (308 aa).

Residues 50–53 (STRT), Gln77, Arg101, and 128–131 (HPCQ) contribute to the carbamoyl phosphate site. L-ornithine-binding positions include Asn160, Asp224, and 228–229 (SM). Carbamoyl phosphate contacts are provided by residues 264–265 (CL) and Arg292.

This sequence belongs to the aspartate/ornithine carbamoyltransferase superfamily. OTCase family.

It localises to the cytoplasm. It catalyses the reaction carbamoyl phosphate + L-ornithine = L-citrulline + phosphate + H(+). Its pathway is amino-acid biosynthesis; L-arginine biosynthesis; L-arginine from L-ornithine and carbamoyl phosphate: step 1/3. Reversibly catalyzes the transfer of the carbamoyl group from carbamoyl phosphate (CP) to the N(epsilon) atom of ornithine (ORN) to produce L-citrulline. The sequence is that of Ornithine carbamoyltransferase from Mycobacterium ulcerans (strain Agy99).